Consider the following 309-residue polypeptide: MAATLRELRGRIRSAGSIKKITKAQELIATSRIAKAQARVEAARPYSTEITSMLTELASASALDHPLLVARENPRRAAVLVVSSDRGLCGAYNANVLRQSEELFALLREEGKEPVVYTVGRKAQGYFNFRQREVTESWSGFSERPTYENAKEIADTLVASFMSGADDEGDDAGADGVLGVDELHIVFTEFRSMLSQSAAARRIAPMVVEYVGDEQPEDGPQTLFSFEPDPETLFDALLPRYVATRVYAALLEAAASESASRRRAMKSATDNADDLIKALKLSANRERQAQITQEISEIVGGANALADSR.

This sequence belongs to the ATPase gamma chain family. As to quaternary structure, F-type ATPases have 2 components, CF(1) - the catalytic core - and CF(0) - the membrane proton channel. CF(1) has five subunits: alpha(3), beta(3), gamma(1), delta(1), epsilon(1). CF(0) has three main subunits: a, b and c.

It localises to the cell membrane. In terms of biological role, produces ATP from ADP in the presence of a proton gradient across the membrane. The gamma chain is believed to be important in regulating ATPase activity and the flow of protons through the CF(0) complex. This Mycolicibacterium gilvum (strain PYR-GCK) (Mycobacterium gilvum (strain PYR-GCK)) protein is ATP synthase gamma chain.